A 200-amino-acid polypeptide reads, in one-letter code: Protein GrpE (200 aa).

Residues 1-27 (MTKQEKAENQEKPTEETVEETPKKETP) are compositionally biased toward basic and acidic residues. A disordered region spans residues 1–50 (MTKQEKAENQEKPTEETVEETPKKETPFEPVMEADEVEETTEAQAPVEEA). The span at 32–41 (MEADEVEETT) shows a compositional bias: acidic residues.

This sequence belongs to the GrpE family. In terms of assembly, homodimer.

It localises to the cytoplasm. Participates actively in the response to hyperosmotic and heat shock by preventing the aggregation of stress-denatured proteins, in association with DnaK and GrpE. It is the nucleotide exchange factor for DnaK and may function as a thermosensor. Unfolded proteins bind initially to DnaJ; upon interaction with the DnaJ-bound protein, DnaK hydrolyzes its bound ATP, resulting in the formation of a stable complex. GrpE releases ADP from DnaK; ATP binding to DnaK triggers the release of the substrate protein, thus completing the reaction cycle. Several rounds of ATP-dependent interactions between DnaJ, DnaK and GrpE are required for fully efficient folding. This is Protein GrpE from Latilactobacillus sakei subsp. sakei (strain 23K) (Lactobacillus sakei subsp. sakei).